We begin with the raw amino-acid sequence, 636 residues long: 1-phosphatidylinositol 4,5-bisphosphate phosphodiesterase zeta-1 (636 aa).

Positions Cys35 to Arg70 constitute an EF-hand domain. The 145-residue stretch at Gln155–Lys299 folds into the PI-PLC X-box domain. Active-site residues include His170 and His215. The segment at Lys311–Arg338 is disordered. The stretch at Gln318–Ile345 forms a coiled coil. The span at Glu321 to Glu336 shows a compositional bias: acidic residues. In terms of domain architecture, PI-PLC Y-box spans Leu375–Arg491. The C2 domain occupies Arg491–Ser617.

As to quaternary structure, interacts via its C2 domain with PtdIns(3)P and, to a lesser extent, PtdIns(5)P in vitro. Ca(2+) is required as a cofactor. In terms of tissue distribution, expressed specifically in testis.

It localises to the nucleus. The protein resides in the cytoplasm. It is found in the perinuclear region. The enzyme catalyses a 1,2-diacyl-sn-glycero-3-phospho-(1D-myo-inositol-4,5-bisphosphate) + H2O = 1D-myo-inositol 1,4,5-trisphosphate + a 1,2-diacyl-sn-glycerol + H(+). The production of the second messenger molecules diacylglycerol (DAG) and inositol 1,4,5-trisphosphate (IP3) is mediated by activated phosphatidylinositol-specific phospholipase C enzymes. In vitro, hydrolyzes PtdIns(4,5)P2 in a Ca(2+)-dependent manner. Triggers intracellular Ca(2+) oscillations in oocytes solely during M phase and is involved in inducing oocyte activation and initiating embryonic development up to the blastocyst stage. Is therefore a strong candidate for the egg-activating soluble sperm factor that is transferred from the sperm into the egg cytoplasm following gamete membrane fusion. May exert an inhibitory effect on phospholipase-C-coupled processes that depend on calcium ions and protein kinase C, including CFTR trafficking and function. The chain is 1-phosphatidylinositol 4,5-bisphosphate phosphodiesterase zeta-1 from Sus scrofa (Pig).